Consider the following 535-residue polypeptide: High-affinity fructose transporter ght6 (535 aa).

Residues 1-9 lie on the Cytoplasmic side of the membrane; it reads MAKILTIVM. Residues 10–30 form a helical membrane-spanning segment; that stretch reads LVFVSMAGWMFGADTGSIGGI. Residues 31 to 58 lie on the Extracellular side of the membrane; it reads TNMRDFQSRYADRYDPVTDTYSYSSARQ. The chain crosses the membrane as a helical span at residues 59–79; the sequence is GLLVGMVNTGTTVGCLLSSPL. The Cytoplasmic portion of the chain corresponds to 80 to 87; it reads GDRFGKRK. The chain crosses the membrane as a helical span at residues 88–108; sequence CIMGWTLVYITGVIVQLTTIP. Residues 109-112 lie on the Extracellular side of the membrane; the sequence is SWVQ. The helical transmembrane segment at 113 to 133 threads the bilayer; it reads MMVAKIWTGLGIGALSVIAPG. Residues 134-144 lie on the Cytoplasmic side of the membrane; it reads YQSESSPPHIR. Residues 145 to 165 form a helical membrane-spanning segment; sequence GAIVTTYQLFITLGIFIAACI. The Extracellular portion of the chain corresponds to 166 to 181; the sequence is NMGTHKYTTHPEAQWR. Residues 182–202 traverse the membrane as a helical segment; the sequence is VPIGINLLWGILMFFGMLFLP. Residues 203–268 are Cytoplasmic-facing; that stretch reads ESPRYLAVKG…IFSNEIRYRT (66 aa). A helical transmembrane segment spans residues 269 to 287; sequence LLGMGVMAFQQLTGNNYFF. Topologically, residues 288 to 303 are extracellular; that stretch reads YYGTQVFRGTGLNSPF. The chain crosses the membrane as a helical span at residues 304–324; it reads LAALILDAVNFGCTFGAIFVL. Residues 325 to 330 are Cytoplasmic-facing; that stretch reads EYFGRR. A helical transmembrane segment spans residues 331–351; the sequence is GPLIVGGVWQSICFFIYASVG. Residues 352 to 365 are Extracellular-facing; the sequence is DRALTRPNGTSNHR. N-linked (GlcNAc...) asparagine glycosylation is present at asparagine 359. Residues 366–386 form a helical membrane-spanning segment; the sequence is AGAVMIVFSCLFIFSFAQTWA. The Cytoplasmic segment spans residues 387 to 406; that stretch reads PAAYVIVGESYPIRYRSKCA. Residues 407-427 traverse the membrane as a helical segment; that stretch reads AVATASNWFWNFMISFFTPFI. Topologically, residues 428 to 434 are extracellular; that stretch reads SNSIGFK. Residues 435–455 traverse the membrane as a helical segment; that stretch reads YGYVFAACNLCAAIIIFLFAK. The Cytoplasmic portion of the chain corresponds to 456-535; that stretch reads ETKGLTLEEI…PQQVTNPVGL (80 aa). Over residues 484-508 the composition is skewed to basic and acidic residues; it reads DREDIKQSDSEKERGPTSKLHEYVE. Residues 484–535 are disordered; it reads DREDIKQSDSEKERGPTSKLHEYVEHAPNSYASTHSTESENYPQQVTNPVGL. Positions 513 to 535 are enriched in polar residues; that stretch reads SYASTHSTESENYPQQVTNPVGL.

Belongs to the major facilitator superfamily. Sugar transporter (TC 2.A.1.1) family.

Its subcellular location is the membrane. In terms of biological role, high-affinity fructose transporter. The sequence is that of High-affinity fructose transporter ght6 (ght6) from Schizosaccharomyces pombe (strain 972 / ATCC 24843) (Fission yeast).